The primary structure comprises 61 residues: Large ribosomal subunit protein bL32 (61 aa).

This sequence belongs to the bacterial ribosomal protein bL32 family.

The protein is Large ribosomal subunit protein bL32 of Ehrlichia canis (strain Jake).